Here is a 129-residue protein sequence, read N- to C-terminus: Small ribosomal subunit protein uS11 (129 aa).

Belongs to the universal ribosomal protein uS11 family. In terms of assembly, part of the 30S ribosomal subunit. Interacts with proteins S7 and S18. Binds to IF-3.

Located on the platform of the 30S subunit, it bridges several disparate RNA helices of the 16S rRNA. Forms part of the Shine-Dalgarno cleft in the 70S ribosome. This Methylobacterium sp. (strain 4-46) protein is Small ribosomal subunit protein uS11.